The following is a 417-amino-acid chain: Equilibrative nucleotide transporter 7 (417 aa).

11 helical membrane-spanning segments follow: residues 19 to 39 (LVCC…LTIT), 54 to 74 (VLTI…ATKE), 84 to 104 (IFGY…DLAS), 110 to 130 (VVAY…DAFV), 143 to 163 (PDFI…TSVL), 184 to 204 (LFIG…TLVF), 264 to 284 (LGIN…GFLY), 293 to 315 (GDWY…RFIP), 326 to 346 (KWIT…YFTA), 353 to 373 (WMLF…VCIF), and 392 to 412 (MCVF…LWLI).

The protein belongs to the SLC29A/ENT transporter (TC 2.A.57) family. As to expression, expressed in leaves and flowers.

It is found in the cell membrane. Its function is as follows. Nucleoside transporter that can mediate uptake of adenosine, uridine, guanosine or cytidine when expressed in a heterologous system (yeast). This Arabidopsis thaliana (Mouse-ear cress) protein is Equilibrative nucleotide transporter 7 (ENT7).